A 472-amino-acid polypeptide reads, in one-letter code: Siroheme synthase 1 (472 aa).

Residues 1–203 (MDYLPLFADL…GQLAQAEEEL (203 aa)) form a precorrin-2 dehydrogenase /sirohydrochlorin ferrochelatase region. NAD(+) is bound by residues 22-23 (EV) and 43-44 (QT). Ser-128 carries the post-translational modification Phosphoserine. Residues 215–472 (GEVALVGAGP…AISPSVVNLA (258 aa)) form a uroporphyrinogen-III C-methyltransferase region. Pro-224 is a binding site for S-adenosyl-L-methionine. Asp-247 acts as the Proton acceptor in catalysis. The active-site Proton donor is Lys-269. Residues 300–302 (GGD), Ile-305, 330–331 (TA), Met-382, and Gly-411 contribute to the S-adenosyl-L-methionine site.

This sequence in the N-terminal section; belongs to the precorrin-2 dehydrogenase / sirohydrochlorin ferrochelatase family. The protein in the C-terminal section; belongs to the precorrin methyltransferase family.

The catalysed reaction is uroporphyrinogen III + 2 S-adenosyl-L-methionine = precorrin-2 + 2 S-adenosyl-L-homocysteine + H(+). The enzyme catalyses precorrin-2 + NAD(+) = sirohydrochlorin + NADH + 2 H(+). It carries out the reaction siroheme + 2 H(+) = sirohydrochlorin + Fe(2+). Its pathway is cofactor biosynthesis; adenosylcobalamin biosynthesis; precorrin-2 from uroporphyrinogen III: step 1/1. The protein operates within cofactor biosynthesis; adenosylcobalamin biosynthesis; sirohydrochlorin from precorrin-2: step 1/1. It functions in the pathway porphyrin-containing compound metabolism; siroheme biosynthesis; precorrin-2 from uroporphyrinogen III: step 1/1. It participates in porphyrin-containing compound metabolism; siroheme biosynthesis; siroheme from sirohydrochlorin: step 1/1. Its pathway is porphyrin-containing compound metabolism; siroheme biosynthesis; sirohydrochlorin from precorrin-2: step 1/1. Functionally, multifunctional enzyme that catalyzes the SAM-dependent methylations of uroporphyrinogen III at position C-2 and C-7 to form precorrin-2 via precorrin-1. Then it catalyzes the NAD-dependent ring dehydrogenation of precorrin-2 to yield sirohydrochlorin. Finally, it catalyzes the ferrochelation of sirohydrochlorin to yield siroheme. This chain is Siroheme synthase 1, found in Yersinia enterocolitica serotype O:8 / biotype 1B (strain NCTC 13174 / 8081).